The sequence spans 236 residues: Phosphoribosylaminoimidazole-succinocarboxamide synthase (236 aa).

Belongs to the SAICAR synthetase family.

The catalysed reaction is 5-amino-1-(5-phospho-D-ribosyl)imidazole-4-carboxylate + L-aspartate + ATP = (2S)-2-[5-amino-1-(5-phospho-beta-D-ribosyl)imidazole-4-carboxamido]succinate + ADP + phosphate + 2 H(+). The protein operates within purine metabolism; IMP biosynthesis via de novo pathway; 5-amino-1-(5-phospho-D-ribosyl)imidazole-4-carboxamide from 5-amino-1-(5-phospho-D-ribosyl)imidazole-4-carboxylate: step 1/2. The chain is Phosphoribosylaminoimidazole-succinocarboxamide synthase from Campylobacter jejuni subsp. doylei (strain ATCC BAA-1458 / RM4099 / 269.97).